The chain runs to 144 residues: Protein MIX23 (144 aa).

An N-acetylalanine modification is found at A2. The stretch at 82–120 (VKSLREEREKNLDDLTLLKRLRKEQTKLKWMQSELNVEE) forms a coiled coil. At K100 the chain carries N6-acetyllysine.

Belongs to the MIX23 family.

The chain is Protein MIX23 from Mus musculus (Mouse).